Here is a 330-residue protein sequence, read N- to C-terminus: Glycerol-3-phosphate dehydrogenase [NAD(P)+] (330 aa).

Residues Trp11, Arg33, and Lys105 each coordinate NADPH. Residues Lys105, Gly133, and Ser135 each coordinate sn-glycerol 3-phosphate. Ala137 is a binding site for NADPH. The sn-glycerol 3-phosphate site is built by Lys188, Asp241, Ser251, Arg252, and Asn253. The active-site Proton acceptor is the Lys188. An NADPH-binding site is contributed by Arg252. Positions 276 and 278 each coordinate NADPH.

This sequence belongs to the NAD-dependent glycerol-3-phosphate dehydrogenase family.

It is found in the cytoplasm. It catalyses the reaction sn-glycerol 3-phosphate + NAD(+) = dihydroxyacetone phosphate + NADH + H(+). The enzyme catalyses sn-glycerol 3-phosphate + NADP(+) = dihydroxyacetone phosphate + NADPH + H(+). It participates in membrane lipid metabolism; glycerophospholipid metabolism. In terms of biological role, catalyzes the reduction of the glycolytic intermediate dihydroxyacetone phosphate (DHAP) to sn-glycerol 3-phosphate (G3P), the key precursor for phospholipid synthesis. In Acidovorax sp. (strain JS42), this protein is Glycerol-3-phosphate dehydrogenase [NAD(P)+].